The primary structure comprises 219 residues: Probable 3-beta-hydroxysteroid-Delta(8),Delta(7)-isomerase (219 aa).

Transmembrane regions (helical) follow at residues Ile29–Gly49, Leu62–Phe82, Val119–Ala139, and Phe181–Ile201. The EXPERA domain occupies Thr58–Ala200.

Belongs to the EBP family.

The protein resides in the endoplasmic reticulum membrane. It catalyses the reaction lathosterol = 5alpha-cholest-8-en-3beta-ol. It participates in steroid biosynthesis; sterol biosynthesis. Its function is as follows. Catalyzes the conversion of Delta(8)-sterols to their corresponding Delta(7)-isomers. This chain is Probable 3-beta-hydroxysteroid-Delta(8),Delta(7)-isomerase, found in Oryza sativa subsp. japonica (Rice).